Consider the following 418-residue polypeptide: STE20-related kinase adapter protein beta (418 aa).

The Protein kinase domain occupies 58–369 (YELQVEIGRG…ASSLLSHVFF (312 aa)). ATP is bound by residues 64–72 (IGRGFDNLT) and Lys-89.

Belongs to the protein kinase superfamily. STE Ser/Thr protein kinase family. STE20 subfamily. As to quaternary structure, component of a trimeric complex composed of STK11/LKB1, STRAD (STRADA or STRADB) and CAB39/MO25 (CAB39/MO25alpha or CAB39L/MO25beta): the complex tethers STK11/LKB1 in the cytoplasm and stimulates its catalytic activity. Interacts with BIRC4/XIAP. These two proteins are likely to coexist in a complex with TAK1, TRAF6, TAB1 and TAB2.

It localises to the nucleus. Its subcellular location is the cytoplasm. Pseudokinase which, in complex with CAB39/MO25 (CAB39/MO25alpha or CAB39L/MO25beta), binds to and activates STK11/LKB1. Adopts a closed conformation typical of active protein kinases and binds STK11/LKB1 as a pseudosubstrate, promoting conformational change of STK11/LKB1 in an active conformation. The polypeptide is STE20-related kinase adapter protein beta (Stradb) (Mus musculus (Mouse)).